A 352-amino-acid polypeptide reads, in one-letter code: Protein TIFY 6B (352 aa).

The tract at residues 1 to 71 (MERDFLGLGS…KSGNYHLPHS (71 aa)) is disordered. Residues 17-26 (VKEETSESSR) are compositionally biased toward basic and acidic residues. Positions 34 to 54 (MNWSFSNKVSASSSQFLSFRP) are enriched in polar residues. One can recognise a Tify domain in the interval 172-207 (PIGSPAQLTIFYAGSVCVYDDISPEKAKAIMLLAGN). A Jas motif is present at residues 302–326 (PLARKASLARFLEKRKERVTSVSPY). Positions 304–311 (ARKASLAR) match the Nuclear localization signal motif.

It belongs to the TIFY/JAZ family. As to quaternary structure, homo- and heterodimer. Interacts with COI1, MYC2, MYC3, MYC4, TIFY10A/JAZ1, TIFY10B/JAZ2, TIFY6A/JAZ4, TIFY5A/JAZ8, TIFY7/JAZ9, TIFY9/JAZ10 and TIFY3A/JAZ11. Interacts (via TIFY domain) with AFPH2/NINJA. Ubiquitinated. Targeted for degradation by the SCF(COI1) E3 ubiquitin ligase-proteasome pathway during jasmonate signaling. Srtongly expressed in root tips.

The protein resides in the nucleus. Functionally, repressor of jasmonate responses. Jasmonoyl-isoleucine (JA-Ile) specifically promotes COI1-TIFY6B/JAZ3 interaction. Acts as a negative regulator of MYC2 function. Feed-back regulated by MYC2. The sequence is that of Protein TIFY 6B (TIFY6B) from Arabidopsis thaliana (Mouse-ear cress).